A 478-amino-acid polypeptide reads, in one-letter code: MSSYSELSNLPIREIPGDYGFPIISAIKDRYDYFYNQGEDAWFHNKAEKYKSTVVKINMAPGPFTSNDYKLVAFLDANSFVCMFDNSLIDKTDTLGGTFKPGKEYYGGYRPVAFIDTKDPNHAALKGYILSSFAKRHNLFIPLFRNTLSDHLFNNLEKQVTEQGKADFNALLPTMTFDFIFRLLCDQKNPSDTVLGAQGPEHLRKWLFPQLIPSLSAKKLPNIIEDMLFHNFLIPFGFIKSDYNKLVDAFSKSAVSMLDEAEKLGIKREEAVQNILFLVGINMFAGLNAFFPHLFRFVGEAGASLHTQLAKEIRSVIKEEGGAITLSAINKMSLVKSVVYETLRLRPPVPLQYGKAKKEFMVQSHDASYKINKGQFVVGYQPMASRDPKIFANPDEFVPDRFMNDGEKMLKHVLWSNGRETESPAPDNKQCPGKDLVHLLGRLILVEFFIRYDTFTLEITPLFRAPNVAFNTLTKASK.

Cysteine 431 provides a ligand contact to heme.

The protein belongs to the cytochrome P450 family. 9-divinyl ether synthase subfamily. In terms of tissue distribution, expressed in roots. Detected in stems, but not in flower buds, petioles, cotyledons or leaves.

It catalyses the reaction (9S)-hydroperoxy-(10E,12Z)-octadecadienoate = colneleate + H2O. The enzyme catalyses (9S)-hydroperoxy-(10E,12Z,15Z)-octadecatrienoate = colnelenate + H2O. Its function is as follows. Involved in the biosynthesis of the anti-fungal toxins colneleate and colnelenate. Can use (9S)-hydroperoxy-(10E,12Z)-octadecadienoate (9-HPOD) and (9S)-hydroperoxy-(10E,12Z,15Z)-octadecatrienoate (9-HPOT) as substrates, but has a very low activity with the corresponding 13-hydroperoxides (13-HPOD and 13-POT). This is Divinyl ether synthase CYP74D1 from Solanum lycopersicum (Tomato).